Reading from the N-terminus, the 180-residue chain is ATP-dependent protease subunit HslV (180 aa).

Thr2 is a catalytic residue. Positions 157, 160, and 163 each coordinate Na(+).

It belongs to the peptidase T1B family. HslV subfamily. A double ring-shaped homohexamer of HslV is capped on each side by a ring-shaped HslU homohexamer. The assembly of the HslU/HslV complex is dependent on binding of ATP.

It localises to the cytoplasm. It catalyses the reaction ATP-dependent cleavage of peptide bonds with broad specificity.. Its activity is regulated as follows. Allosterically activated by HslU binding. Functionally, protease subunit of a proteasome-like degradation complex believed to be a general protein degrading machinery. The chain is ATP-dependent protease subunit HslV from Tolumonas auensis (strain DSM 9187 / NBRC 110442 / TA 4).